The primary structure comprises 41 residues: Large ribosomal subunit protein bL36 (41 aa).

The protein belongs to the bacterial ribosomal protein bL36 family.

This Caulobacter vibrioides (strain ATCC 19089 / CIP 103742 / CB 15) (Caulobacter crescentus) protein is Large ribosomal subunit protein bL36.